A 155-amino-acid polypeptide reads, in one-letter code: 3-hydroxyacyl-[acyl-carrier-protein] dehydratase FabZ (155 aa).

H58 is a catalytic residue.

Belongs to the thioester dehydratase family. FabZ subfamily.

The protein resides in the cytoplasm. It carries out the reaction a (3R)-hydroxyacyl-[ACP] = a (2E)-enoyl-[ACP] + H2O. Involved in unsaturated fatty acids biosynthesis. Catalyzes the dehydration of short chain beta-hydroxyacyl-ACPs and long chain saturated and unsaturated beta-hydroxyacyl-ACPs. In Rhizobium leguminosarum bv. trifolii (strain WSM2304), this protein is 3-hydroxyacyl-[acyl-carrier-protein] dehydratase FabZ.